Reading from the N-terminus, the 411-residue chain is Pyridinium-3,5-bisthiocarboxylic acid mononucleotide nickel insertion protein (411 aa).

It belongs to the LarC family.

It catalyses the reaction Ni(II)-pyridinium-3,5-bisthiocarboxylate mononucleotide = pyridinium-3,5-bisthiocarboxylate mononucleotide + Ni(2+). Functionally, involved in the biosynthesis of a nickel-pincer cofactor ((SCS)Ni(II) pincer complex). Binds Ni(2+), and functions in nickel delivery to pyridinium-3,5-bisthiocarboxylic acid mononucleotide (P2TMN), to form the mature cofactor. Is thus probably required for the activation of nickel-pincer cofactor-dependent enzymes. This Geobacillus kaustophilus (strain HTA426) protein is Pyridinium-3,5-bisthiocarboxylic acid mononucleotide nickel insertion protein.